The chain runs to 362 residues: Ferrochelatase (362 aa).

Fe cation is bound by residues His-228 and Glu-309.

This sequence belongs to the ferrochelatase family.

The protein resides in the cytoplasm. It catalyses the reaction heme b + 2 H(+) = protoporphyrin IX + Fe(2+). It participates in porphyrin-containing compound metabolism; protoheme biosynthesis; protoheme from protoporphyrin-IX: step 1/1. Its function is as follows. Catalyzes the ferrous insertion into protoporphyrin IX. The polypeptide is Ferrochelatase (Bordetella parapertussis (strain 12822 / ATCC BAA-587 / NCTC 13253)).